The following is an 821-amino-acid chain: KN motif and ankyrin repeat domain-containing protein 3 (821 aa).

Polar residues predominate over residues 1 to 10 (MAKFALNQNL). Disordered regions lie at residues 1 to 36 (MAKF…PYSV), 58 to 184 (GPAA…AQLQ), 224 to 333 (LLAG…APET), and 385 to 547 (AAEE…GRCE). Residues 77–88 (RPGLAGARSPGA) show a composition bias toward low complexity. The span at 128 to 150 (PRVEHTLRETSRRLELAQTHERA) shows a compositional bias: basic and acidic residues. Residues 151–181 (PSPGRGVPRSPRGSGRSSPAPNLAPASPGPA) show a composition bias toward low complexity. Residues Ser-152, Ser-160, Ser-164, Ser-167, Ser-168, and Ser-177 each carry the phosphoserine modification. Positions 181 to 230 (AQLQLVREQMAAALRRLRELEDQARTLPELQEQVRALRAEKARLLAGRAQ) form a coiled coil. Residues 237–261 (AETRPDKLAQLRRLTERLATSERGG) are compositionally biased toward basic and acidic residues. Residues Ser-271, Ser-280, and Ser-293 each carry the phosphoserine modification. Residues 367-404 (GVSELLRGRLRELEEAREAAEEAAAGARAQLREATTQT) are a coiled coil. Composition is skewed to low complexity over residues 388–400 (EAAA…LREA) and 494–507 (NGGA…SGSG). 5 ANK repeats span residues 622 to 652 (NGNT…EVNR), 656 to 690 (AGYS…DVNA), 695 to 724 (TGQT…DVNA), 728 to 758 (DGAT…DPAI), and 762 to 785 (EGTS…LHAH). A disordered region spans residues 784–821 (AHLSSGQPDTQSESPPGSQTATPGEGECGDNGENPQVQ). Residues 787–805 (SSGQPDTQSESPPGSQTAT) show a composition bias toward polar residues.

Strongly expressed in breast, liver, lung, skeletal muscle and kidney.

In terms of biological role, may be involved in the control of cytoskeleton formation by regulating actin polymerization. The chain is KN motif and ankyrin repeat domain-containing protein 3 from Homo sapiens (Human).